The primary structure comprises 78 residues: Alpha-neurotoxin homolog 1 (78 aa).

Residues 1–21 (MKTLLLTLVVVTIVCLDFGYT) form the signal peptide. 4 disulfide bridges follow: cysteine 24-cysteine 42, cysteine 37-cysteine 57, cysteine 59-cysteine 70, and cysteine 71-cysteine 76.

It belongs to the three-finger toxin family. Short-chain subfamily. Orphan group XII sub-subfamily. As to expression, expressed by the venom gland.

The protein resides in the secreted. This chain is Alpha-neurotoxin homolog 1, found in Micrurus corallinus (Brazilian coral snake).